A 438-amino-acid polypeptide reads, in one-letter code: 3-phosphoshikimate 1-carboxyvinyltransferase 1 (438 aa).

The 3-phosphoshikimate site is built by lysine 30, serine 31, and arginine 35. Residue lysine 30 participates in phosphoenolpyruvate binding. The phosphoenolpyruvate site is built by glycine 104 and arginine 132. Residues serine 178, serine 179, glutamine 180, serine 207, glutamate 326, and histidine 353 each contribute to the 3-phosphoshikimate site. Glutamine 180 serves as a coordination point for phosphoenolpyruvate. Glutamate 326 (proton acceptor) is an active-site residue. Phosphoenolpyruvate contacts are provided by arginine 357, arginine 398, and lysine 423.

The protein belongs to the EPSP synthase family. As to quaternary structure, monomer.

Its subcellular location is the cytoplasm. It catalyses the reaction 3-phosphoshikimate + phosphoenolpyruvate = 5-O-(1-carboxyvinyl)-3-phosphoshikimate + phosphate. It participates in metabolic intermediate biosynthesis; chorismate biosynthesis; chorismate from D-erythrose 4-phosphate and phosphoenolpyruvate: step 6/7. Functionally, catalyzes the transfer of the enolpyruvyl moiety of phosphoenolpyruvate (PEP) to the 5-hydroxyl of shikimate-3-phosphate (S3P) to produce enolpyruvyl shikimate-3-phosphate and inorganic phosphate. The polypeptide is 3-phosphoshikimate 1-carboxyvinyltransferase 1 (Streptomyces coelicolor (strain ATCC BAA-471 / A3(2) / M145)).